Reading from the N-terminus, the 362-residue chain is tRNA/tmRNA (uracil-C(5))-methyltransferase (362 aa).

The S-adenosyl-L-methionine site is built by Q186, Y214, N219, E235, and D295. C320 acts as the Nucleophile in catalysis. E354 acts as the Proton acceptor in catalysis.

The protein belongs to the class I-like SAM-binding methyltransferase superfamily. RNA M5U methyltransferase family. TrmA subfamily.

It catalyses the reaction uridine(54) in tRNA + S-adenosyl-L-methionine = 5-methyluridine(54) in tRNA + S-adenosyl-L-homocysteine + H(+). The catalysed reaction is uridine(341) in tmRNA + S-adenosyl-L-methionine = 5-methyluridine(341) in tmRNA + S-adenosyl-L-homocysteine + H(+). Functionally, dual-specificity methyltransferase that catalyzes the formation of 5-methyluridine at position 54 (m5U54) in all tRNAs, and that of position 341 (m5U341) in tmRNA (transfer-mRNA). The sequence is that of tRNA/tmRNA (uracil-C(5))-methyltransferase from Stutzerimonas stutzeri (strain A1501) (Pseudomonas stutzeri).